Reading from the N-terminus, the 1441-residue chain is Remodeling and spacing factor 1 (1441 aa).

Positions 17–84 (PGSCPNFAVV…MRKIGKSVTA (68 aa)) constitute a DDT domain. Residues K136 and K215 each participate in a glycyl lysine isopeptide (Lys-Gly) (interchain with G-Cter in SUMO2) cross-link. Positions 215–227 (KNSSQQDNSSRES) are enriched in polar residues. The interval 215 to 283 (KNSSQQDNSS…TTVKKEKEDE (69 aa)) is disordered. Residue S227 is modified to Phosphoserine. 2 stretches are compositionally biased toward basic and acidic residues: residues 234–257 (ETKK…KSEE) and 274–283 (TTVKKEKEDE). Glycyl lysine isopeptide (Lys-Gly) (interchain with G-Cter in SUMO2) cross-links involve residues K236, K243, K248, K252, and K254. K277 is covalently cross-linked (Glycyl lysine isopeptide (Lys-Gly) (interchain with G-Cter in SUMO1); alternate). K277 is covalently cross-linked (Glycyl lysine isopeptide (Lys-Gly) (interchain with G-Cter in SUMO2); alternate). Glycyl lysine isopeptide (Lys-Gly) (interchain with G-Cter in SUMO2) cross-links involve residues K284, K288, K294, K305, K306, K309, K323, K327, K337, K342, K358, K373, K381, and K390. Residues 330-340 (RADPKDTKSSM) show a composition bias toward basic and acidic residues. The segment at 330 to 385 (RADPKDTKSSMEKPVAQEPERIEFGGNIKSSHEITEKSTEETEKLKNDQQAKIPLK) is disordered. Residues 359–378 (SSHEITEKSTEETEKLKNDQ) are compositionally biased toward basic and acidic residues. Phosphoserine occurs at positions 392 and 397. Residues K400, K405, K415, and K419 each participate in a glycyl lysine isopeptide (Lys-Gly) (interchain with G-Cter in SUMO2) cross-link. The residue at position 429 (S429) is a Phosphoserine. A Glycyl lysine isopeptide (Lys-Gly) (interchain with G-Cter in SUMO2) cross-link involves residue K439. Residue K456 forms a Glycyl lysine isopeptide (Lys-Gly) (interchain with G-Cter in SUMO1); alternate linkage. Residue K456 forms a Glycyl lysine isopeptide (Lys-Gly) (interchain with G-Cter in SUMO2); alternate linkage. Residues K463 and K468 each participate in a glycyl lysine isopeptide (Lys-Gly) (interchain with G-Cter in SUMO2) cross-link. Residues 467-480 (TKEESYSPSKDRNI) show a composition bias toward basic and acidic residues. The disordered stretch occupies residues 467 to 634 (TKEESYSPSK…AAETSPPSNI (168 aa)). Residue S473 is modified to Phosphoserine. A compositionally biased stretch (polar residues) spans 482-498 (TEGNGTESLNSVITSMK). Residue K498 forms a Glycyl lysine isopeptide (Lys-Gly) (interchain with G-Cter in SUMO2) linkage. Over residues 500–514 (GELEKETAPLRKDAD) the composition is skewed to basic and acidic residues. Position 524 is a phosphoserine (S524). Over residues 552 to 562 (SKTALSSTESC) the composition is skewed to polar residues. A Glycyl lysine isopeptide (Lys-Gly) (interchain with G-Cter in SUMO2) cross-link involves residue K565. A compositionally biased stretch (basic and acidic residues) spans 565–601 (KGEEKSPKTKKDKRPPILECLEKLEKSKKTFLDKDAQ). Phosphoserine occurs at positions 570 and 604. The segment covering 609-621 (EVPKSTLESEKPG) has biased composition (basic and acidic residues). Phosphoserine is present on S622. T628 is modified (phosphothreonine). S629 is subject to Phosphoserine. Residues K662, K663, K670, K677, K698, and K709 each participate in a glycyl lysine isopeptide (Lys-Gly) (interchain with G-Cter in SUMO2) cross-link. The tract at residues 675–887 (FTKVEMDNLD…EEKESEEAIL (213 aa)) is disordered. At S748 the chain carries Phosphoserine. Basic and acidic residues-rich tracts occupy residues 753–770 (LEPE…EKTN), 789–802 (AEIR…KRGE), and 816–831 (KTDK…KDTN). Residues K758, K768, K795, and K799 each participate in a glycyl lysine isopeptide (Lys-Gly) (interchain with G-Cter in SUMO2) cross-link. A compositionally biased stretch (low complexity) spans 864–873 (GSGSEKSSAA). A compositionally biased stretch (acidic residues) spans 874–887 (SEEEEEKESEEAIL). S882 is subject to Phosphoserine. The PHD-type zinc-finger motif lies at 891-941 (DEPCKKCGLPNHPELILLCDSCDSGYHTACLRPPLMIIPDGEWFCPPCQHK). Residues 942 to 1012 (LLCEKLEEQL…SKANLLERRS (71 aa)) adopt a coiled-coil conformation. A disordered region spans residues 983-1007 (PPQEPDFSEDQEEKKKDSKKSKANL). K1039 is covalently cross-linked (Glycyl lysine isopeptide (Lys-Gly) (interchain with G-Cter in SUMO2)). Position 1050 is an N6-acetyllysine (K1050). A disordered region spans residues 1063-1428 (ISTILDEERK…EEEEDELLRV (366 aa)). Composition is skewed to acidic residues over residues 1094–1107 (LDSD…ESED) and 1120–1141 (VVSD…DSDT). Residues S1096, S1098, and S1105 each carry the phosphoserine modification. Basic residues predominate over residues 1146 to 1169 (RRLRRHPSRPMRQSRRLRRKTPKK). Acidic residues predominate over residues 1189–1199 (SDFSDDFSDDF). Residues 1203–1212 (RRRRSRRNQK) are compositionally biased toward basic residues. Phosphoserine is present on residues S1221, S1223, and S1226. The span at 1229 to 1244 (SLRRGKEIRRVHKRRL) shows a compositional bias: basic residues. Phosphoserine occurs at positions 1258 and 1277. T1278 is modified (phosphothreonine). Over residues 1280–1292 (EYSEADEEEEEEE) the composition is skewed to acidic residues. T1305 carries the post-translational modification Phosphothreonine. 2 positions are modified to phosphoserine: S1325 and S1336. Residues 1335-1344 (ESTKKPYRIE) are compositionally biased toward basic and acidic residues. K1339 is modified (N6-acetyllysine). S1345, S1359, and S1375 each carry phosphoserine. The segment covering 1394–1408 (PKDNSTASASLASNG) has biased composition (polar residues).

Component of the RSF-1 ISWI chromatin-remodeling complex at least composed of SMARCA1 and RSF1. Within the RSF-1 ISWI chromatin-remodeling complex interacts with SMARCA1. Component of the RSF-5 ISWI chromatin-remodeling complex (also called the RSF complex) at least composed of SMARCA5/SNF2H and RSF1. Within the RSF-5 ISWI chromatin-remodeling complex interacts with SMARCA5/SNF2H; the interaction is direct. Identified in a centromere complex containing histones H2A, H2B and H4, and at least CENPA, CENPB, CENPC, CENPT, CENPN, HJURP, SUPT16H, SSRP1 and RSF1. Also binds the HBV pX/HBx protein, which is required to activate transcription of the viral genome. Phosphorylated. As to expression, ubiquitously expressed. Highly expressed in the heart, skeletal muscle, kidney and placenta. Expressed at low levels in the brain and colon.

It is found in the nucleus. Its function is as follows. Regulatory subunit of the ATP-dependent RSF-1 and RSF-5 ISWI chromatin-remodeling complexes, which form ordered nucleosome arrays on chromatin and facilitate access to DNA during DNA-templated processes such as DNA replication, transcription, and repair. Binds to core histones together with SMARCA5, and is required for the assembly of regular nucleosome arrays by the RSF-5 ISWI chromatin-remodeling complex. Directly stimulates the ATPase activity of SMARCA1 and SMARCA5 in the RSF-1 and RSF-5 ISWI chromatin-remodeling complexes, respectively. The RSF-1 ISWI chromatin remodeling complex has a lower ATP hydrolysis rate than the RSF-5 ISWI chromatin-remodeling complex. The complexes do not have the ability to slide mononucleosomes to the center of a DNA template. Facilitates transcription of hepatitis B virus (HBV) genes by the pX transcription activator. In case of infection by HBV, together with pX, it represses TNF-alpha induced NF-kappa-B transcription activation. Represses transcription when artificially recruited to chromatin by fusion to a heterogeneous DNA binding domain. This Homo sapiens (Human) protein is Remodeling and spacing factor 1 (RSF1).